The sequence spans 363 residues: Ferrochelatase (363 aa).

Positions 209 and 290 each coordinate Fe cation.

It belongs to the ferrochelatase family.

It localises to the cytoplasm. The enzyme catalyses heme b + 2 H(+) = protoporphyrin IX + Fe(2+). The protein operates within porphyrin-containing compound metabolism; protoheme biosynthesis; protoheme from protoporphyrin-IX: step 1/1. Its function is as follows. Catalyzes the ferrous insertion into protoporphyrin IX. This is Ferrochelatase from Methylibium petroleiphilum (strain ATCC BAA-1232 / LMG 22953 / PM1).